A 124-amino-acid polypeptide reads, in one-letter code: Large ribosomal subunit protein uL22 (124 aa).

This sequence belongs to the universal ribosomal protein uL22 family. Part of the 50S ribosomal subunit.

Its function is as follows. This protein binds specifically to 23S rRNA; its binding is stimulated by other ribosomal proteins, e.g. L4, L17, and L20. It is important during the early stages of 50S assembly. It makes multiple contacts with different domains of the 23S rRNA in the assembled 50S subunit and ribosome. In terms of biological role, the globular domain of the protein is located near the polypeptide exit tunnel on the outside of the subunit, while an extended beta-hairpin is found that lines the wall of the exit tunnel in the center of the 70S ribosome. This Treponema pallidum (strain Nichols) protein is Large ribosomal subunit protein uL22.